A 299-amino-acid polypeptide reads, in one-letter code: Arginase (299 aa).

Positions 99, 122, 124, and 126 each coordinate Mn(2+). Residues 124–128 (HGDVN), 135–137 (SGN), and aspartate 178 contribute to the substrate site. The Mn(2+) site is built by aspartate 226 and aspartate 228. The substrate site is built by threonine 240 and glutamate 271.

This sequence belongs to the arginase family. Homohexamer. Mn(2+) is required as a cofactor.

The catalysed reaction is L-arginine + H2O = urea + L-ornithine. It functions in the pathway nitrogen metabolism; urea cycle; L-ornithine and urea from L-arginine: step 1/1. Its function is as follows. Controls arginine catabolism. This Bacillus caldovelox protein is Arginase (rocF).